We begin with the raw amino-acid sequence, 782 residues long: Endonuclease MutS2 (782 aa).

An ATP-binding site is contributed by 336–343 (GPNTGGKT). The Smr domain maps to 707–782 (LDLRGYRYEE…GFGVTVAELK (76 aa)).

It belongs to the DNA mismatch repair MutS family. MutS2 subfamily. Homodimer. Binds to stalled ribosomes, contacting rRNA.

Endonuclease that is involved in the suppression of homologous recombination and thus may have a key role in the control of bacterial genetic diversity. Its function is as follows. Acts as a ribosome collision sensor, splitting the ribosome into its 2 subunits. Detects stalled/collided 70S ribosomes which it binds and splits by an ATP-hydrolysis driven conformational change. Acts upstream of the ribosome quality control system (RQC), a ribosome-associated complex that mediates the extraction of incompletely synthesized nascent chains from stalled ribosomes and their subsequent degradation. Probably generates substrates for RQC. The sequence is that of Endonuclease MutS2 from Staphylococcus epidermidis (strain ATCC 12228 / FDA PCI 1200).